We begin with the raw amino-acid sequence, 248 residues long: (2S)-[(R)-hydroxy(phenyl)methyl]succinyl-CoA dehydrogenase subunit BbsD (248 aa).

The NAD(+) site is built by Ser15, Asp36, Asp62, Ile63, Asn89, Tyr153, and Lys157. Tyr153 acts as the Proton acceptor in catalysis.

This sequence belongs to the short-chain dehydrogenases/reductases (SDR) family. In terms of assembly, heterotetramer composed of 2 inactive BbsC subunits and 2 active BbsD subunits.

The catalysed reaction is (2S)-[(R)-hydroxy(phenyl)methyl]succinyl-CoA + NAD(+) = (S)-2-benzoylsuccinyl-CoA + NADH + H(+). The protein operates within xenobiotic degradation; toluene degradation. Its activity is regulated as follows. Activity is probably regulated by the inactive BbsC subunit. Functionally, involved in an anaerobic toluene degradation pathway. Active subunit that catalyzes the oxidation of 2-(alpha-hydroxybenzyl)succinyl-CoA to 2-benzoylsuccinyl-CoA. In vitro, can catalyze the NADH-dependent reduction of the artificial substrates 2,2-dichloroacetophene and 2,4'-dichloroacetophenone. This Thauera aromatica protein is (2S)-[(R)-hydroxy(phenyl)methyl]succinyl-CoA dehydrogenase subunit BbsD.